The primary structure comprises 111 residues: Large ribosomal subunit protein P1 (111 aa).

The span at 65 to 89 (SGAGSGPAPAAAAAAPAAGGAAPAA) shows a compositional bias: low complexity. The tract at residues 65 to 111 (SGAGSGPAPAAAAAAPAAGGAAPAAETKKKEEPKEESDDDMGFGLFD) is disordered.

Belongs to the eukaryotic ribosomal protein P1/P2 family. In terms of assembly, P1 and P2 exist as dimers at the large ribosomal subunit.

Plays an important role in the elongation step of protein synthesis. The polypeptide is Large ribosomal subunit protein P1 (Caenorhabditis elegans).